The sequence spans 173 residues: Photosystem I assembly protein Ycf3 (173 aa).

3 TPR repeats span residues 35–68 (AYLY…EDNQ), 72–105 (GETL…NPKQ), and 120–153 (GRMA…YPGG).

The protein belongs to the Ycf3 family.

Its subcellular location is the cellular thylakoid membrane. In terms of biological role, essential for the assembly of the photosystem I (PSI) complex. May act as a chaperone-like factor to guide the assembly of the PSI subunits. The polypeptide is Photosystem I assembly protein Ycf3 (Prochlorococcus marinus (strain NATL2A)).